Reading from the N-terminus, the 607-residue chain is Arginine--tRNA ligase (607 aa).

The 'HIGH' region motif lies at 147–157 (PNIAKEMHVGH).

Belongs to the class-I aminoacyl-tRNA synthetase family. Monomer.

It localises to the cytoplasm. The enzyme catalyses tRNA(Arg) + L-arginine + ATP = L-arginyl-tRNA(Arg) + AMP + diphosphate. The chain is Arginine--tRNA ligase from Prochlorococcus marinus (strain NATL1A).